Consider the following 453-residue polypeptide: Nuclear distribution protein nudF-2 (453 aa).

Residues 9-41 (QADELHRALIAYLTAANLPNTAAALREELNLSE) enclose the LisH domain. The stretch at 62-88 (SVVRLQKKIMDLESRNHILQSELDNAT) forms a coiled coil. The tract at residues 84-107 (LDNATPTSRQNKDPVAWLPRAPPR) is disordered. 7 WD repeats span residues 112-153 (SHRD…RTIK), 155-195 (HTKA…KNIR), 199-239 (GHDH…CVKT), 242-281 (GHAEWVRDVCPSLDGKYILSTSDDYTSRLWDVTITNPEPK), 286-345 (GHEH…IKTL), 347-386 (GHDNWVRGLVFHPGGKYLLSVSDDKTLRCWDLTQEGKCVK), and 391-449 (AHGH…LNVR).

It belongs to the WD repeat LIS1/nudF family. In terms of assembly, self-associates. Interacts with ro-11/nde1 and dynein.

The protein localises to the cytoplasm. The protein resides in the cytoskeleton. It is found in the spindle pole. Its function is as follows. Positively regulates the activity of the minus-end directed microtubule motor protein dynein. May enhance dynein-mediated microtubule sliding by targeting dynein to the microtubule plus end. Required for nuclear migration during vegetative growth as well as development. Required for retrograde early endosome (EE) transport from the hyphal tip. Required for localization of dynein to the mitotic spindle poles. Recruits additional proteins to the dynein complex at SPBs. This chain is Nuclear distribution protein nudF-2 (nmp-1), found in Neurospora crassa (strain ATCC 24698 / 74-OR23-1A / CBS 708.71 / DSM 1257 / FGSC 987).